We begin with the raw amino-acid sequence, 146 residues long: Early E3 16 kDa glycoprotein (146 aa).

N-linked (GlcNAc...) asparagine; by host glycosylation is found at asparagine 51 and asparagine 84.

E3 proteins seem to be dispensable for virus growth in tissue culture cells. They are potentially important for virus growth under special conditions; E3 region may help adenoviruses to evade the immune surveillance of the host. This is Early E3 16 kDa glycoprotein from Human adenovirus B serotype 3 (HAdV-3).